We begin with the raw amino-acid sequence, 3131 residues long: Enniatin synthase (3131 aa).

The tract at residues 53 to 466 (ADDKQRAVGH…VEKVDMMTQE (414 aa)) is condensation 1. Residues 186-212 (NDEHPRQFETPDSSQATPEEDLQPNPS) are disordered. The interval 495–887 (SQSPNKAAVA…GRMDSQVKIR (393 aa)) is adenylation 1. In terms of domain architecture, Carrier 1 spans 1010 to 1086 (SSGTDTYTKL…GLKAIVIGTS (77 aa)). An O-(pantetheine 4'-phosphoryl)serine modification is found at S1047. The condensation 2 stretch occupies residues 1105–1534 (SYAQNRMWFL…ETCISVLPLT (430 aa)). The segment at 1563-1960 (FREQAAANPE…GRMDNQFKIR (398 aa)) is adenylation 2. The segment at 2021-2177 (EGWQDHFESG…YLAEVIDGLI (157 aa)) is S-adenosyl-L-methionine-dependent N-methyltransferase. Carrier domains follow at residues 2504–2578 (FPIS…RQGL) and 2598–2671 (APRT…ESSH). Residues S2538 and S2632 each carry the O-(pantetheine 4'-phosphoryl)serine modification. Positions 2718 to 3123 (QDVYPSTQMQ…RHVLEEVCKT (406 aa)) are condensation 3.

The protein belongs to the ATP-dependent AMP-binding enzyme family. Pantetheine 4'-phosphate is required as a cofactor. In terms of processing, the N-terminus is blocked.

It participates in antibiotic biosynthesis; enniatin biosynthesis. Its activity is regulated as follows. The N-methylation activity is inhibited by S-adenosyl-L-homocysteine and sinefugin. Its function is as follows. Nonribosomal peptide synthetase that synthesizes enniatin by coupling three D-hydroxycarboxylic acids and three L-amino acids via amide and ester bonds in an alternating fashion. Whereas ESYN1 can accept different amino acids as precursors (L -valine, L-isoleucine or L-leucine), only one species of D-hydroxycarboxylic acid can be found in natural enniatin isolates (D-hydroxyisovaleric acid, D-Hiv). D-Hiv stems from L-valine deanimation by a valine aminotransferase to 2-keto-isovaleric acid (2-Kiv), which becomes subsequently reduced by a keto-isovaleric acid reductase (KivR) to D-Hiv. Peptide bond formation and N-methylation of the amino acid occur before three enzyme-bound dipeptidols are condensed to a hexapeptidol. This chain is Enniatin synthase, found in Fusarium equiseti (Fusarium scirpi).